Here is a 480-residue protein sequence, read N- to C-terminus: Protein DETOXIFICATION 15 (480 aa).

12 helical membrane passes run 36–56 (GPLI…VMFV), 69–89 (IATS…ASAM), 118–138 (LLSV…VFFG), 143–163 (IAHL…AYGL), 180–200 (VVIC…VLVL), 208–228 (GAAV…SCYV), 255–275 (LVIP…ELLV), 294–314 (VWMI…NELG), 326–346 (RVVL…LILI), 360–380 (VVSH…LDSF), 396–416 (IGAF…GLLL), and 428–448 (WLGI…ITFF).

Belongs to the multi antimicrobial extrusion (MATE) (TC 2.A.66.1) family.

Its subcellular location is the membrane. This chain is Protein DETOXIFICATION 15, found in Arabidopsis thaliana (Mouse-ear cress).